A 339-amino-acid polypeptide reads, in one-letter code: Ketol-acid reductoisomerase (NADP(+)) (339 aa).

The region spanning 1–182 (MRVYYDRDAD…GGGRSGIIET (182 aa)) is the KARI N-terminal Rossmann domain. NADP(+) contacts are provided by residues 24-27 (YGSQ), Lys48, Ser51, Thr53, and 83-86 (DELQ). His108 is an active-site residue. Residue Gly134 coordinates NADP(+). In terms of domain architecture, KARI C-terminal knotted spans 183 to 328 (NFKEECETDL…AKLRGMMPWI (146 aa)). Mg(2+) contacts are provided by Asp191, Glu195, Glu227, and Glu231. Ser252 is a binding site for substrate.

This sequence belongs to the ketol-acid reductoisomerase family. Mg(2+) is required as a cofactor.

It carries out the reaction (2R)-2,3-dihydroxy-3-methylbutanoate + NADP(+) = (2S)-2-acetolactate + NADPH + H(+). The enzyme catalyses (2R,3R)-2,3-dihydroxy-3-methylpentanoate + NADP(+) = (S)-2-ethyl-2-hydroxy-3-oxobutanoate + NADPH + H(+). The protein operates within amino-acid biosynthesis; L-isoleucine biosynthesis; L-isoleucine from 2-oxobutanoate: step 2/4. It participates in amino-acid biosynthesis; L-valine biosynthesis; L-valine from pyruvate: step 2/4. Involved in the biosynthesis of branched-chain amino acids (BCAA). Catalyzes an alkyl-migration followed by a ketol-acid reduction of (S)-2-acetolactate (S2AL) to yield (R)-2,3-dihydroxy-isovalerate. In the isomerase reaction, S2AL is rearranged via a Mg-dependent methyl migration to produce 3-hydroxy-3-methyl-2-ketobutyrate (HMKB). In the reductase reaction, this 2-ketoacid undergoes a metal-dependent reduction by NADPH to yield (R)-2,3-dihydroxy-isovalerate. This is Ketol-acid reductoisomerase (NADP(+)) from Sinorhizobium fredii (strain NBRC 101917 / NGR234).